Here is a 460-residue protein sequence, read N- to C-terminus: Lysosomal proton-coupled steroid conjugate and bile acid symporter SLC46A3 (460 aa).

The N-terminal stretch at 1–25 (MKISFIEPAILLNAFAMTLTIPLTA) is a signal peptide. At 26–73 (QYVYRRIWEETGNYTFASNSNGSECDQNKSSSIFAFREEVQKKASLFN) the chain is on the extracellular side. Residues Asn-38, Asn-46, and Asn-53 are each glycosylated (N-linked (GlcNAc...) asparagine). Residues 74–94 (LQVEMSALIPGLVSTFMLLAS) form a helical membrane-spanning segment. Topologically, residues 95–111 (SDNHGRKLPMVLSSLGS) are cytoplasmic. Residues 112–132 (LGTNTWLCMMSYFDLPLQLLI) form a helical membrane-spanning segment. Topologically, residues 133–135 (AST) are extracellular. Residues 136-156 (FIGALFGNYTTFWGACFAYIV) traverse the membrane as a helical segment. The Cytoplasmic portion of the chain corresponds to 157 to 170 (DQQKEYKHRIIRIA). A helical transmembrane segment spans residues 171–191 (ILDFMLGVVTGLTGLSSGYFI). The Extracellular segment spans residues 192–195 (RELG). Residues 196 to 216 (FVWSYFITAMVLIVNLAYILF) form a helical membrane-spanning segment. The Cytoplasmic portion of the chain corresponds to 217-257 (FLNDPIKESSSQIVTMSCIESLKDLFYRTYMLFKNGSSKRQ). Residues 258–278 (ALLCLLIFTLVIYFFVIIGIS) form a helical membrane-spanning segment. Residues 279-301 (PIFTLYELGPPLCWNEVYIGYGS) are Extracellular-facing. The helical transmembrane segment at 302–322 (ALGSVSFLSSFLGIWLFSYCL) threads the bilayer. Residues 323-324 (KD) lie on the Cytoplasmic side of the membrane. The chain crosses the membrane as a helical span at residues 325–345 (IHIAYIGIFTTMVGMTLAAFT). At 346 to 347 (RT) the chain is on the extracellular side. Residues 348-368 (TLMMFLVRIPFIFTIMPLSVL) traverse the membrane as a helical segment. The Cytoplasmic segment spans residues 369-381 (RSMLSKVVHSTEQ). A helical transmembrane segment spans residues 382–402 (GALFACIAFLETLAGVTSTSA). At 403-410 (YSGIYSAT) the chain is on the extracellular side. A helical transmembrane segment spans residues 411-431 (VAWYPGFIFLLSAGLLVLPAI). Residues 432-460 (SLCCVKSIGWEEGSYTLLVHEEPSEHTSD) lie on the Cytoplasmic side of the membrane. The Tyrosine-based lysosomal-sorting motif signature appears at 446-449 (YTLL).

The protein belongs to the major facilitator superfamily. SLC46A family. As to expression, expressed in liver, kidney, small intestine and colon.

It localises to the lysosome membrane. It carries out the reaction estrone 3-sulfate(out) + n H(+)(out) = estrone 3-sulfate(in) + n H(+)(in). The catalysed reaction is 25-hydroxyvitamin D3 sulfate(out) + n H(+)(out) = 25-hydroxyvitamin D3 sulfate(in) + n H(+)(in). It catalyses the reaction cholate(out) + n H(+)(out) = cholate(in) + n H(+)(in). The enzyme catalyses glycocholate(out) + n H(+)(out) = glycocholate(in) + n H(+)(in). It carries out the reaction taurocholate(out) + n H(+)(out) = taurocholate(in) + n H(+)(in). The catalysed reaction is dehydroepiandrosterone 3-sulfate(out) + n H(+)(out) = dehydroepiandrosterone 3-sulfate(in) + n H(+)(in). It catalyses the reaction N-acetyl-D-muramoyl-L-alanyl-D-isoglutamine(out) + n H(+)(out) = N-acetyl-D-muramoyl-L-alanyl-D-isoglutamine(in) + n H(+)(in). The enzyme catalyses 2',3'-cGAMP(out) + n H(+)(out) = 2',3'-cGAMP(in) + n H(+)(in). Its function is as follows. Lysosomal proton-coupled steroid conjugate and bile acid transporter. Preferentially recognizes lipophilic steroid conjugates or bile acis as endogenous substrates and seems to mediate escape from lysosomes to the cytoplasm. Modulates hepatic cytosolic copper homeostasis, maybe acting as a lysosomal copper transporter and sequestering copper ions in the lysosome. Delivers pathogen-associated molecular patterns to cytosolic pattern recognition receptors as part of the innate immune response to microbes. Selectively transports bacterial muramyl dipeptide (MDP) into the cytosol for recognition by NOD2, triggering inflammatory responses. Likely acts as a redundant importer of cyclic GMP-AMP dinucleotides (cGAMPs) in monocyte and macrophage cell lineages. The transport mechanism, its electrogenicity and stoichiometry remain to be elucidated. This chain is Lysosomal proton-coupled steroid conjugate and bile acid symporter SLC46A3 (Slc46a3), found in Mus musculus (Mouse).